The chain runs to 279 residues: Acetylglutamate kinase (279 aa).

Substrate contacts are provided by residues 64-65 (GG), arginine 86, and asparagine 177.

It belongs to the acetylglutamate kinase family. ArgB subfamily.

It is found in the cytoplasm. The enzyme catalyses N-acetyl-L-glutamate + ATP = N-acetyl-L-glutamyl 5-phosphate + ADP. Its pathway is amino-acid biosynthesis; L-arginine biosynthesis; N(2)-acetyl-L-ornithine from L-glutamate: step 2/4. In terms of biological role, catalyzes the ATP-dependent phosphorylation of N-acetyl-L-glutamate. The protein is Acetylglutamate kinase of Campylobacter jejuni (strain RM1221).